A 249-amino-acid chain; its full sequence is Diaminopimelate epimerase (249 aa).

Substrate is bound by residues Asn11 and Asn60. The active-site Proton donor is the Cys69. Substrate contacts are provided by residues 70–71, Asn164, and 182–183; these read GN and ER. The Proton acceptor role is filled by Cys192. Residue 193 to 194 coordinates substrate; sequence GT.

The protein belongs to the diaminopimelate epimerase family. In terms of assembly, homodimer.

The protein localises to the cytoplasm. The catalysed reaction is (2S,6S)-2,6-diaminopimelate = meso-2,6-diaminopimelate. The protein operates within amino-acid biosynthesis; L-lysine biosynthesis via DAP pathway; DL-2,6-diaminopimelate from LL-2,6-diaminopimelate: step 1/1. Its function is as follows. Catalyzes the stereoinversion of LL-2,6-diaminopimelate (L,L-DAP) to meso-diaminopimelate (meso-DAP), a precursor of L-lysine and an essential component of the bacterial peptidoglycan. The sequence is that of Diaminopimelate epimerase from Campylobacter jejuni (strain RM1221).